A 677-amino-acid chain; its full sequence is DNA ligase (677 aa).

Residues 38 to 42, 87 to 88, and glutamate 121 each bind NAD(+); these read DYDFD and SL. Catalysis depends on lysine 123, which acts as the N6-AMP-lysine intermediate. NAD(+) is bound by residues arginine 144, glutamate 187, lysine 300, and lysine 324. 4 residues coordinate Zn(2+): cysteine 418, cysteine 421, cysteine 436, and cysteine 442. The region spanning 601–677 is the BRCT domain; sequence LINSNFEGLS…ISEEEFEAML (77 aa).

Belongs to the NAD-dependent DNA ligase family. LigA subfamily. The cofactor is Mg(2+). Mn(2+) is required as a cofactor.

It catalyses the reaction NAD(+) + (deoxyribonucleotide)n-3'-hydroxyl + 5'-phospho-(deoxyribonucleotide)m = (deoxyribonucleotide)n+m + AMP + beta-nicotinamide D-nucleotide.. Its function is as follows. DNA ligase that catalyzes the formation of phosphodiester linkages between 5'-phosphoryl and 3'-hydroxyl groups in double-stranded DNA using NAD as a coenzyme and as the energy source for the reaction. It is essential for DNA replication and repair of damaged DNA. The chain is DNA ligase from Chlorobium luteolum (strain DSM 273 / BCRC 81028 / 2530) (Pelodictyon luteolum).